A 270-amino-acid chain; its full sequence is Alpha N-terminal protein methyltransferase 1 (270 aa).

S-adenosyl-L-methionine contacts are provided by residues Gly-114, Arg-119, 137–139 (EQN), 165–166 (LQ), and Gln-180.

This sequence belongs to the methyltransferase superfamily. NTM1 family.

It carries out the reaction N-terminal L-alanyl-L-prolyl-L-lysyl-[protein] + 3 S-adenosyl-L-methionine = N-terminal N,N,N-trimethyl-L-alanyl-L-prolyl-L-lysyl-[protein] + 3 S-adenosyl-L-homocysteine + 3 H(+). It catalyses the reaction N-terminal L-seryl-L-prolyl-L-lysyl-[protein] + 3 S-adenosyl-L-methionine = N-terminal N,N,N-trimethyl-L-seryl-L-prolyl-L-lysyl-[protein] + 3 S-adenosyl-L-homocysteine + 3 H(+). The enzyme catalyses N-terminal L-prolyl-L-prolyl-L-lysyl-[protein] + 2 S-adenosyl-L-methionine = N-terminal N,N-dimethyl-L-prolyl-L-prolyl-L-lysyl-[protein] + 2 S-adenosyl-L-homocysteine + 2 H(+). Functionally, alpha-N-methyltransferase that methylates the N-terminus of target proteins containing the N-terminal motif [Ala/Pro/Ser]-Pro-Lys when the initiator Met is cleaved. Specifically catalyzes mono-, di- or tri-methylation of exposed alpha-amino group of Ala or Ser residue in the [Ala/Ser]-Pro-Lys motif and mono- or di-methylation of Pro in the Pro-Pro-Lys motif. In Dictyostelium discoideum (Social amoeba), this protein is Alpha N-terminal protein methyltransferase 1.